The primary structure comprises 392 residues: Formate-dependent phosphoribosylglycinamide formyltransferase (392 aa).

N(1)-(5-phospho-beta-D-ribosyl)glycinamide is bound by residues 22 to 23 (EL) and Glu82. Residues Arg114, Lys155, 160–165 (SSGKGQ), 195–198 (EGVV), and Glu203 each bind ATP. An ATP-grasp domain is found at 119–308 (RLAAEELGLP…EFALHVRAFL (190 aa)). Residues Glu267 and Glu279 each contribute to the Mg(2+) site. Residues Asp286, Lys355, and 362–363 (RR) each bind N(1)-(5-phospho-beta-D-ribosyl)glycinamide.

It belongs to the PurK/PurT family. In terms of assembly, homodimer.

It catalyses the reaction N(1)-(5-phospho-beta-D-ribosyl)glycinamide + formate + ATP = N(2)-formyl-N(1)-(5-phospho-beta-D-ribosyl)glycinamide + ADP + phosphate + H(+). Its pathway is purine metabolism; IMP biosynthesis via de novo pathway; N(2)-formyl-N(1)-(5-phospho-D-ribosyl)glycinamide from N(1)-(5-phospho-D-ribosyl)glycinamide (formate route): step 1/1. Involved in the de novo purine biosynthesis. Catalyzes the transfer of formate to 5-phospho-ribosyl-glycinamide (GAR), producing 5-phospho-ribosyl-N-formylglycinamide (FGAR). Formate is provided by PurU via hydrolysis of 10-formyl-tetrahydrofolate. The sequence is that of Formate-dependent phosphoribosylglycinamide formyltransferase from Salmonella arizonae (strain ATCC BAA-731 / CDC346-86 / RSK2980).